Here is a 114-residue protein sequence, read N- to C-terminus: Cytochrome c oxidase subunit 7A2-like, mitochondrial (114 aa).

The N-terminal 55 residues, 1 to 55 (MYYKFSGFTQKLAGAWASEAYSPQGLKPVVSTEAPPIIFATPTKLTSDSTVYDYA), are a transit peptide targeting the mitochondrion. Lys-69 is subject to N6-acetyllysine. A helical membrane pass occupies residues 82–107 (PDQMLYRTTMALTVGGTIYCLIALYM).

This sequence belongs to the cytochrome c oxidase VIIa family. In terms of assembly, interacts with the mitochondrial respiratory complexes III (CIII) and IV (CIV), promoting their association.

The protein localises to the mitochondrion inner membrane. In terms of biological role, assembly factor that mediates the formation of some mitochondrial respiratory supercomplexes (respirasomes), thereby promoting oxidative phosphorylation and energy metabolism. Acts as a molecular adapter that associates with both mitochondrial respiratory complexes III (CIII) and IV (CIV), promoting their association. Mediates the formation of various mitochondrial respiratory supercomplexes, such as MCIII(2)IV(2), composed of two CIII and two CIV, and the CS-respirasome (MCI(1)III(2)IV(2)), composed of one CI, two CIII and two CIV. Not involved in the formation of the canonical respirasome (MCI(1)III(2)IV(1)), composed of one CI, two CIII and one CIV. The formation of different respirasomes is important for cell adaptation to oxygen conditions and prevent metabolic exhaustion: supercomplexes mediated by COX7A2L/SCAF1 are required to maintain oxidative phosphorylation upon low oxygen conditions and promote metabolic rewiring toward glycolysis. In Homo sapiens (Human), this protein is Cytochrome c oxidase subunit 7A2-like, mitochondrial.